A 160-amino-acid chain; its full sequence is Transcription elongation factor GreA (160 aa).

A coiled-coil region spans residues 43-75; that stretch reads LSENAEYEAAREQQAQMESKIVDLENKLTRASI.

This sequence belongs to the GreA/GreB family.

Its function is as follows. Necessary for efficient RNA polymerase transcription elongation past template-encoded arresting sites. The arresting sites in DNA have the property of trapping a certain fraction of elongating RNA polymerases that pass through, resulting in locked ternary complexes. Cleavage of the nascent transcript by cleavage factors such as GreA or GreB allows the resumption of elongation from the new 3'terminus. GreA releases sequences of 2 to 3 nucleotides. In Prosthecochloris aestuarii (strain DSM 271 / SK 413), this protein is Transcription elongation factor GreA.